Consider the following 1155-residue polypeptide: DNA-directed RNA polymerase subunit beta (1155 aa).

The protein belongs to the RNA polymerase beta chain family. The RNAP catalytic core consists of 2 alpha, 1 beta, 1 beta' and 1 omega subunit. When a sigma factor is associated with the core the holoenzyme is formed, which can initiate transcription.

It catalyses the reaction RNA(n) + a ribonucleoside 5'-triphosphate = RNA(n+1) + diphosphate. Its function is as follows. DNA-dependent RNA polymerase catalyzes the transcription of DNA into RNA using the four ribonucleoside triphosphates as substrates. The chain is DNA-directed RNA polymerase subunit beta from Thermobifida fusca (strain YX).